We begin with the raw amino-acid sequence, 506 residues long: MSVLIVTSLGDIVIDLHSDKCPLTCKNFLKLCKIKYYNGCLFHTVQKDFTAQTGDPTGTGAGGDSIYKFLYGEQARFYKDEIHLDLKHSKTGTVAMASGGENLNASQFYFTLRDDLDYLDGKHTVFGQIAEGFDTLTRINEAYVDPKNRPYKNIRIKHTHILDDPFDDPPQLAEMMPDASPEGKPKEEVKDDVRLEDDWVPMDEELGAQELEEVIREKAAHSSAVVLESIGDIPEAEVKPPDNVLFVCKLNPVTEDEDLHTIFSRFGTVVSADVIRDFKTGDSLCYAFIEFENKESCEQAYFKMDNALIDDRRIHVDFSQSVSKLWSQFRQKDSQKGKGNGCFKCGSTDHIAKDCVGGPSSKFIVKDQNRQHGGGEGYEMVFEGDVHETPKHNSHERERSEKIQRRSPHGNGEGKRQHRDERDDGRRQHDREDARELERKHRERKERESREDEDRRRRRRREESRDKESRRERDEDDHRSHRDYKERRRERDDRHGREARHERRDR.

The 161-residue stretch at 1-161 folds into the PPIase cyclophilin-type domain; that stretch reads MSVLIVTSLG…KNIRIKHTHI (161 aa). An RRM domain is found at 243–321; that stretch reads NVLFVCKLNP…RRIHVDFSQS (79 aa). The segment at 341-357 adopts a CCHC-type zinc-finger fold; the sequence is GCFKCGSTDHIAKDCVG. 2 stretches are compositionally biased toward basic and acidic residues: residues 388 to 404 and 412 to 506; these read ETPKHNSHERERSEKIQ and GEGK…RRDR. The interval 388 to 506 is disordered; the sequence is ETPKHNSHER…REARHERRDR (119 aa).

It belongs to the cyclophilin-type PPIase family. Component of the BZR1 complex. Interacts with NRPB1 (via CTD domain), SCL28, SCL30, SCL30A, SCL33, SC35, SR30, SR34, RSZ21, RS2Z33, RS31 and RS40. As to expression, ubiquitous.

The protein localises to the nucleus. The enzyme catalyses [protein]-peptidylproline (omega=180) = [protein]-peptidylproline (omega=0). Its function is as follows. PPIases accelerate the folding of proteins. It catalyzes the cis-trans isomerization of proline imidic peptide bonds in oligopeptides. Influences somehow regulation of RNA pol II (CTD) phosphorylation. Binds RNA with preferences for GC-rich sequences. Probably involved in activities connecting transcription and pre-mRNA processing. Involved in brassinostroid response. This is Peptidyl-prolyl cis-trans isomerase CYP59 (CYP59) from Arabidopsis thaliana (Mouse-ear cress).